The following is a 194-amino-acid chain: Accessory gene regulator protein B (194 aa).

The next 5 helical transmembrane spans lie at 44–64, 80–100, 107–127, 142–162, and 163–183; these read IVVY…LTHL, SSLL…YLII, FVLL…APAA, KILS…TKEP, and VNKL…PIFF.

It belongs to the AgrB family.

The protein localises to the cell membrane. In terms of biological role, essential for the production of a quorum sensing system signal molecule, the autoinducing peptide (AIP). This quorum sensing system is responsible for the regulation of the expression of virulence factor genes. Involved in the proteolytic processing of AgrD, the precursor of AIP. In Staphylococcus epidermidis, this protein is Accessory gene regulator protein B.